The following is a 523-amino-acid chain: 2-isopropylmalate synthase (523 aa).

In terms of domain architecture, Pyruvate carboxyltransferase spans Val5–Trp267. Mn(2+) is bound by residues Asp14, His202, His204, and Asn238. Residues Arg392–Val523 are regulatory domain.

This sequence belongs to the alpha-IPM synthase/homocitrate synthase family. LeuA type 1 subfamily. In terms of assembly, homodimer. Mn(2+) is required as a cofactor.

Its subcellular location is the cytoplasm. The enzyme catalyses 3-methyl-2-oxobutanoate + acetyl-CoA + H2O = (2S)-2-isopropylmalate + CoA + H(+). It participates in amino-acid biosynthesis; L-leucine biosynthesis; L-leucine from 3-methyl-2-oxobutanoate: step 1/4. Its function is as follows. Catalyzes the condensation of the acetyl group of acetyl-CoA with 3-methyl-2-oxobutanoate (2-ketoisovalerate) to form 3-carboxy-3-hydroxy-4-methylpentanoate (2-isopropylmalate). The protein is 2-isopropylmalate synthase of Salmonella newport (strain SL254).